A 99-amino-acid chain; its full sequence is Evasin P1162 (99 aa).

The signal sequence occupies residues 1–28 (MEVKTFAFLQIAVCIAIGIELICAGTNA). Cystine bridges form between Cys40–Cys59, Cys44–Cys61, and Cys55–Cys72. Asn43, Asn49, Asn58, and Asn85 each carry an N-linked (GlcNAc...) asparagine glycan.

Its subcellular location is the secreted. In terms of biological role, salivary chemokine-binding protein which binds to host chemokines CXCL1, CXCL2, CXCL3, CXCL5 and CXCL8. The polypeptide is Evasin P1162 (Ixodes ricinus (Common tick)).